Consider the following 122-residue polypeptide: Small ribosomal subunit protein uS13 (122 aa).

Residues 97-122 (PVRGQRTHTNAKTRKGRSKLPIAGKK) are disordered.

This sequence belongs to the universal ribosomal protein uS13 family. As to quaternary structure, part of the 30S ribosomal subunit. Forms a loose heterodimer with protein S19. Forms two bridges to the 50S subunit in the 70S ribosome.

In terms of biological role, located at the top of the head of the 30S subunit, it contacts several helices of the 16S rRNA. In the 70S ribosome it contacts the 23S rRNA (bridge B1a) and protein L5 of the 50S subunit (bridge B1b), connecting the 2 subunits; these bridges are implicated in subunit movement. Contacts the tRNAs in the A and P-sites. This Wolbachia pipientis subsp. Culex pipiens (strain wPip) protein is Small ribosomal subunit protein uS13.